The primary structure comprises 147 residues: Antiholin-like protein LrgA (147 aa).

Helical transmembrane passes span 12–32 (PAHF…SKII), 35–55 (FMPI…VLLC), 74–94 (NIGL…GVIS), and 98–118 (FLII…TGYV).

Belongs to the CidA/LrgA family. LrgA subfamily.

The protein resides in the cell membrane. In terms of biological role, inhibits the expression or activity of extracellular murein hydrolases by interacting, possibly with LrgB, with the holin-like proteins CidA and/or CidB. The LrgAB and CidAB proteins may affect the proton motive force of the membrane. May be involved in programmed cell death (PCD), possibly triggering PCD in response to antibiotics and environmental stresses. This is Antiholin-like protein LrgA from Staphylococcus aureus (strain USA300).